A 502-amino-acid polypeptide reads, in one-letter code: Large ribosomal subunit protein uL2m (502 aa).

Positions 458–502 (AMNPVDHPHGGGEGRTKGGRPSVSPWGKPTKAGFRAGVGVGKRRI) are disordered. Over residues 463–473 (DHPHGGGEGRT) the composition is skewed to basic and acidic residues. Gly residues predominate over residues 493–502 (AGVGVGKRRI).

The protein belongs to the universal ribosomal protein uL2 family.

It localises to the mitochondrion. The polypeptide is Large ribosomal subunit protein uL2m (RPL2) (Oryza sativa (Rice)).